Consider the following 142-residue polypeptide: Large ribosomal subunit protein uL11 (142 aa).

This sequence belongs to the universal ribosomal protein uL11 family. In terms of assembly, part of the ribosomal stalk of the 50S ribosomal subunit. Interacts with L10 and the large rRNA to form the base of the stalk. L10 forms an elongated spine to which L12 dimers bind in a sequential fashion forming a multimeric L10(L12)X complex. One or more lysine residues are methylated.

Functionally, forms part of the ribosomal stalk which helps the ribosome interact with GTP-bound translation factors. This is Large ribosomal subunit protein uL11 from Pseudoalteromonas translucida (strain TAC 125).